Here is a 173-residue protein sequence, read N- to C-terminus: Crossover junction endodeoxyribonuclease RuvC (173 aa).

Catalysis depends on residues Asp-8, Glu-67, and Asp-139. Residues Asp-8, Glu-67, and Asp-139 each contribute to the Mg(2+) site.

Belongs to the RuvC family. As to quaternary structure, homodimer which binds Holliday junction (HJ) DNA. The HJ becomes 2-fold symmetrical on binding to RuvC with unstacked arms; it has a different conformation from HJ DNA in complex with RuvA. In the full resolvosome a probable DNA-RuvA(4)-RuvB(12)-RuvC(2) complex forms which resolves the HJ. The cofactor is Mg(2+).

The protein resides in the cytoplasm. It catalyses the reaction Endonucleolytic cleavage at a junction such as a reciprocal single-stranded crossover between two homologous DNA duplexes (Holliday junction).. Its function is as follows. The RuvA-RuvB-RuvC complex processes Holliday junction (HJ) DNA during genetic recombination and DNA repair. Endonuclease that resolves HJ intermediates. Cleaves cruciform DNA by making single-stranded nicks across the HJ at symmetrical positions within the homologous arms, yielding a 5'-phosphate and a 3'-hydroxyl group; requires a central core of homology in the junction. The consensus cleavage sequence is 5'-(A/T)TT(C/G)-3'. Cleavage occurs on the 3'-side of the TT dinucleotide at the point of strand exchange. HJ branch migration catalyzed by RuvA-RuvB allows RuvC to scan DNA until it finds its consensus sequence, where it cleaves and resolves the cruciform DNA. This chain is Crossover junction endodeoxyribonuclease RuvC, found in Salmonella agona (strain SL483).